Here is a 496-residue protein sequence, read N- to C-terminus: Adenosylhomocysteinase (496 aa).

Residues Thr68, Asp157, and Glu219 each contribute to the substrate site. 220-222 contributes to the NAD(+) binding site; it reads TTT. Residues Lys249 and Asp253 each contribute to the substrate site. NAD(+) is bound by residues Asn254, 283 to 288, Glu306, Asn341, 362 to 364, and Asn410; these read GYGDVG and IGH.

Belongs to the adenosylhomocysteinase family. It depends on NAD(+) as a cofactor.

It is found in the cytoplasm. The enzyme catalyses S-adenosyl-L-homocysteine + H2O = L-homocysteine + adenosine. It participates in amino-acid biosynthesis; L-homocysteine biosynthesis; L-homocysteine from S-adenosyl-L-homocysteine: step 1/1. Functionally, may play a key role in the regulation of the intracellular concentration of adenosylhomocysteine. This chain is Adenosylhomocysteinase, found in Mycolicibacterium paratuberculosis (strain ATCC BAA-968 / K-10) (Mycobacterium paratuberculosis).